The sequence spans 292 residues: Acetylglutamate kinase (292 aa).

Substrate contacts are provided by residues 64–65, Arg86, and Asn190; that span reads GG.

It belongs to the acetylglutamate kinase family. ArgB subfamily.

It is found in the cytoplasm. The enzyme catalyses N-acetyl-L-glutamate + ATP = N-acetyl-L-glutamyl 5-phosphate + ADP. It functions in the pathway amino-acid biosynthesis; L-arginine biosynthesis; N(2)-acetyl-L-ornithine from L-glutamate: step 2/4. In terms of biological role, catalyzes the ATP-dependent phosphorylation of N-acetyl-L-glutamate. The protein is Acetylglutamate kinase of Trichlorobacter lovleyi (strain ATCC BAA-1151 / DSM 17278 / SZ) (Geobacter lovleyi).